The chain runs to 322 residues: Thioredoxin reductase (322 aa).

Residues 11–14 (SGPA), 40–41 (IA), Gln-45, Asn-54, Val-87, and Cys-145 contribute to the FAD site. Cys-142 and Cys-145 are joined by a disulfide. Ser-192 is modified (phosphoserine). Thr-278 bears the Phosphothreonine mark. Ser-279 is modified (phosphoserine). Residues Asp-288 and 295–297 (RQA) each bind FAD.

It belongs to the class-II pyridine nucleotide-disulfide oxidoreductase family. In terms of assembly, homodimer. It depends on FAD as a cofactor.

It is found in the cytoplasm. The enzyme catalyses [thioredoxin]-dithiol + NADP(+) = [thioredoxin]-disulfide + NADPH + H(+). The chain is Thioredoxin reductase (trr1) from Schizosaccharomyces pombe (strain 972 / ATCC 24843) (Fission yeast).